We begin with the raw amino-acid sequence, 85 residues long: Protein RnfH (85 aa).

The protein belongs to the UPF0125 (RnfH) family.

The polypeptide is Protein RnfH (Cereibacter sphaeroides (strain ATCC 17029 / ATH 2.4.9) (Rhodobacter sphaeroides)).